We begin with the raw amino-acid sequence, 782 residues long: Calcium-independent phospholipase A2-gamma (782 aa).

A glycan (N-linked (GlcNAc...) asparagine) is linked at Asn4. Disordered regions lie at residues 219 to 275 (EKMS…PSAI) and 317 to 343 (SKSQSEEQEEPAKTDQAVSKDRNAEEK). A compositionally biased stretch (basic and acidic residues) spans 220–248 (KMSQQKENEHFRDKSELEDKKVEEGKLRS). An N-linked (GlcNAc...) asparagine glycan is attached at Asn361. The PNPLA domain occupies 445–640 (LSIDGGGTRG…LLNNPSALAM (196 aa)). A GXGXXG motif is present at residues 449-454 (GGGTRG). A helical membrane pass occupies residues 475–495 (LFDYICGVSTGAILAFMLGLF). The short motif at 481 to 485 (GVSTG) is the GXSXG element. Ser483 serves as the catalytic Nucleophile. The active-site Proton acceptor is the Asp627. The DGA/G motif lies at 627–629 (DGG). Lys736 carries the post-translational modification N6-succinyllysine.

In terms of tissue distribution, expressed in parenchymal tissues including heart, skeletal muscle, placenta, brain, liver and pancreas. Also expressed in bronchial epithelial cells and kidney. Highest expression is observed in skeletal muscle and heart.

The protein localises to the endoplasmic reticulum membrane. It is found in the mitochondrion membrane. It localises to the peroxisome membrane. It carries out the reaction a 1,2-diacyl-sn-glycero-3-phosphocholine + H2O = a 1-acyl-sn-glycero-3-phosphocholine + a fatty acid + H(+). The catalysed reaction is a 1,2-diacyl-sn-glycero-3-phosphocholine + H2O = a 2-acyl-sn-glycero-3-phosphocholine + a fatty acid + H(+). It catalyses the reaction a 1,2-diacyl-sn-glycero-3-phosphoethanolamine + H2O = a 1-acyl-sn-glycero-3-phosphoethanolamine + a fatty acid + H(+). The enzyme catalyses a 1-O-(1Z-alkenyl)-2-acyl-sn-glycero-3-phosphocholine + H2O = a 1-O-(1Z-alkenyl)-sn-glycero-3-phosphocholine + a fatty acid + H(+). It carries out the reaction a 1-acyl-sn-glycero-3-phosphocholine + H2O = sn-glycerol 3-phosphocholine + a fatty acid + H(+). The catalysed reaction is 1-acyl-2-(9Z,12Z)-octadecadienoyl-sn-glycero-3-phosphocholine + H2O = a 1-acyl-sn-glycero-3-phosphocholine + (9Z,12Z)-octadecadienoate + H(+). It catalyses the reaction 1-acyl-2-(5Z,8Z,11Z,14Z-eicosatetraenoyl)-sn-glycero-3-phosphocholine + H2O = a 1-acyl-sn-glycero-3-phosphocholine + (5Z,8Z,11Z,14Z)-eicosatetraenoate + H(+). The enzyme catalyses 1-hexadecanoyl-2-(5Z,8Z,11Z,14Z-eicosatetraenoyl)-sn-glycero-3-phosphocholine + H2O = 1-hexadecanoyl-sn-glycero-3-phosphocholine + (5Z,8Z,11Z,14Z)-eicosatetraenoate + H(+). It carries out the reaction 1-octadecanoyl-2-(9Z-octadecenoyl)-sn-glycero-3-phosphocholine + H2O = 1-octadecanoyl-sn-glycero-3-phosphocholine + (9Z)-octadecenoate + H(+). The catalysed reaction is 1-hexadecanoyl-2-(9Z-octadecenoyl)-sn-glycero-3-phosphocholine + H2O = 1-hexadecanoyl-sn-glycero-3-phosphocholine + (9Z)-octadecenoate + H(+). It catalyses the reaction 1-hexadecanoyl-2-(9Z,12Z-octadecadienoyl)-sn-glycero-3-phosphocholine + H2O = (9Z,12Z)-octadecadienoate + 1-hexadecanoyl-sn-glycero-3-phosphocholine + H(+). The enzyme catalyses 1-acyl-2-(9Z,12Z)-octadecadienoyl-sn-glycero-3-phosphoethanolamine + H2O = a 1-acyl-sn-glycero-3-phosphoethanolamine + (9Z,12Z)-octadecadienoate + H(+). It carries out the reaction 1-acyl-2-(5Z,8Z,11Z,14Z)-eicosatetraenoyl-sn-glycero-3-phosphoethanolamine + H2O = a 1-acyl-sn-glycero-3-phosphoethanolamine + (5Z,8Z,11Z,14Z)-eicosatetraenoate + H(+). The catalysed reaction is 1-hexadecanoyl-2-(5Z,8Z,11Z,14Z-eicosatetraenoyl)-sn-glycero-3-phosphoethanolamine + H2O = 1-hexadecanoyl-sn-glycero-3-phosphoethanolamine + (5Z,8Z,11Z,14Z)-eicosatetraenoate + H(+). It catalyses the reaction 1-hexadecanoyl-2-(5Z,8Z,11Z,14Z-eicosatetraenoyl)-sn-glycero-3-phosphocholine + H2O = 2-(5Z,8Z,11Z,14Z)-eicosatetraenoyl-sn-glycero-3-phosphocholine + hexadecanoate + H(+). The enzyme catalyses 1-octadecanoyl-2-(9Z-octadecenoyl)-sn-glycero-3-phosphocholine + H2O = 2-(9Z-octadecenoyl)-sn-glycero-3-phosphocholine + octadecanoate + H(+). It carries out the reaction 1-hexadecanoyl-2-(4Z,7Z,10Z,13Z,16Z,19Z-docosahexaenoyl)-sn-glycero-3-phosphocholine + H2O = 2-(4Z,7Z,10Z,13Z,16Z,19Z-docosahexaenoyl)-sn-glycero-3-phosphocholine + hexadecanoate + H(+). The catalysed reaction is 1-O-(1Z)-hexadecenyl-2 (5Z,8Z,11Z,14Z)-eicosatetraenoyl-sn-glycero-3-phosphocholine + H2O = 1-(1Z-hexadecenyl)-sn-glycero-3-phosphocholine + (5Z,8Z,11Z,14Z)-eicosatetraenoate + H(+). It catalyses the reaction 1-O-(1Z-hexadecenyl)-2-(9Z-octadecenoyl)-sn-glycero-3-phosphocholine + H2O = 1-(1Z-hexadecenyl)-sn-glycero-3-phosphocholine + (9Z)-octadecenoate + H(+). The enzyme catalyses 1-hexadecanoyl-sn-glycero-3-phosphocholine + H2O = sn-glycerol 3-phosphocholine + hexadecanoate + H(+). It carries out the reaction 1',3'-bis-[1,2-di-(9Z,12Z-octadecadienoyl)-sn-glycero-3-phospho]-glycerol + H2O = 1'-[1,2-di-(9Z,12Z-octadecadienoyl)-sn-glycero-3-phospho]-3'-[1-(9Z,12Z-octadecadienoyl)-sn-glycero-3-phospho]-glycerol + (9Z,12Z)-octadecadienoate + H(+). The catalysed reaction is 1'-[1-acyl-2-(9-hydroxy-(10E,12Z)-octadecadienoyl)-sn-glycero-3-phospho]-3'-[1,2-diacyl-sn-glycero-3-phospho]-glycerol + H2O = 9-hydroxy-(10E,12Z)-octadecadienoate + 1'-[1,2-diacyl-sn-glycero-3-phospho],3'-[1-acyl-sn-glycero-3-phospho]-glycerol + H(+). It participates in phospholipid metabolism. Its activity is regulated as follows. Calcium-independent phospholipase. Inhibited by (E)-6-bromomethylene-3-1-naphthalenyl-2H-tetrahydropyran-2-one (BEL). The activity toward 1-hexadecanoyl-2-(5Z,8Z,11Z,14Z-eicosatetraenoyl)-sn-glycero-3-phosphocholine is stimulated by cardiolipin. Calcium-independent and membrane-bound phospholipase, that catalyzes the esterolytic cleavage of fatty acids from glycerophospholipids to yield free fatty acids and lysophospholipids, hence regulating membrane physical properties and the release of lipid second messengers and growth factors. Hydrolyzes phosphatidylethanolamine, phosphatidylcholine and probably phosphatidylinositol with a possible preference for the former. Also has a broad substrate specificity in terms of fatty acid moieties, hydrolyzing saturated and mono-unsaturated fatty acids at nearly equal rates from either the sn-1 or sn-2 position in diacyl phosphatidylcholine. However, has a weak activity toward polyunsaturated fatty acids at the sn-2 position, and thereby favors the production of 2-arachidonoyl lysophosphatidylcholine, a key branch point metabolite in eicosanoid signaling. On the other hand, can produce arachidonic acid from the sn-1 position of diacyl phospholipid and from the sn-2 position of arachidonate-containing plasmalogen substrates. Therefore, plays an important role in the mobilization of arachidonic acid in response to cellular stimuli and the generation of lipid second messengers. Can also hydrolyze lysophosphatidylcholine. In the mitochondrial compartment, catalyzes the hydrolysis and release of oxidized aliphatic chains from cardiolipin and integrates mitochondrial bioenergetics and signaling. It is essential for maintaining efficient bioenergetic mitochondrial function through tailoring mitochondrial membrane lipid metabolism and composition. This Homo sapiens (Human) protein is Calcium-independent phospholipase A2-gamma.